Reading from the N-terminus, the 480-residue chain is Proline--tRNA ligase (480 aa).

The protein belongs to the class-II aminoacyl-tRNA synthetase family. ProS type 3 subfamily. Homodimer.

Its subcellular location is the cytoplasm. It catalyses the reaction tRNA(Pro) + L-proline + ATP = L-prolyl-tRNA(Pro) + AMP + diphosphate. In terms of biological role, catalyzes the attachment of proline to tRNA(Pro) in a two-step reaction: proline is first activated by ATP to form Pro-AMP and then transferred to the acceptor end of tRNA(Pro). The sequence is that of Proline--tRNA ligase from Pyrococcus abyssi (strain GE5 / Orsay).